The sequence spans 343 residues: N-acetyl-gamma-glutamyl-phosphate reductase (343 aa).

Cysteine 147 is an active-site residue.

This sequence belongs to the NAGSA dehydrogenase family. Type 1 subfamily.

It is found in the cytoplasm. The catalysed reaction is N-acetyl-L-glutamate 5-semialdehyde + phosphate + NADP(+) = N-acetyl-L-glutamyl 5-phosphate + NADPH + H(+). Its pathway is amino-acid biosynthesis; L-arginine biosynthesis; N(2)-acetyl-L-ornithine from L-glutamate: step 3/4. Functionally, catalyzes the NADPH-dependent reduction of N-acetyl-5-glutamyl phosphate to yield N-acetyl-L-glutamate 5-semialdehyde. The chain is N-acetyl-gamma-glutamyl-phosphate reductase from Listeria innocua serovar 6a (strain ATCC BAA-680 / CLIP 11262).